The following is a 493-amino-acid chain: Dipeptide permease D (493 aa).

13 consecutive transmembrane segments (helical) span residues 14-34 (VVAL…LLIL), 49-69 (ALFS…GYLA), 91-111 (LVLG…AIIV), 138-158 (GGFS…PIAC), 167-187 (WAMG…IFLC), 212-232 (NWGW…VLFW), 235-255 (WAVY…GKIY), 267-287 (LGLI…AQQG), 312-332 (MFQS…AWLI), 344-364 (IWGK…ILTL), 379-399 (LMIA…PVAM), 413-433 (VLTG…AGVI), and 458-478 (VFSE…LIWL).

The protein belongs to the major facilitator superfamily. Proton-dependent oligopeptide transporter (POT/PTR) (TC 2.A.17) family. DtpD subfamily.

It localises to the cell inner membrane. Functionally, probable proton-dependent permease that transports dipeptides. The sequence is that of Dipeptide permease D from Citrobacter rodentium (strain ICC168) (Citrobacter freundii biotype 4280).